The following is a 121-amino-acid chain: Immunoglobulin kappa variable 4-1 (121 aa).

The first 20 residues, 1 to 20 (MVLQTQVFISLLLWISGAYG), serve as a signal peptide directing secretion. Residues 21–43 (DIVMTQSPDSLAVSLGERATINC) are framework-1. In terms of domain architecture, Ig-like spans 21 to 121 (DIVMTQSPDS…YYCQQYYSTP (101 aa)). C43 and C114 are disulfide-bonded. The segment at 44–60 (KSSQSVLYSSNNKNYLA) is complementarity-determining-1. A framework-2 region spans residues 61–75 (WYQQKPGQPPKLLIY). The segment at 76–82 (WASTRES) is complementarity-determining-2. A framework-3 region spans residues 83-114 (GVPDRFSGSGSGTDFTLTISSLQAEDVAVYYC). The interval 115-121 (QQYYSTP) is complementarity-determining-3.

Immunoglobulins are composed of two identical heavy chains and two identical light chains; disulfide-linked.

Its subcellular location is the secreted. The protein resides in the cell membrane. Functionally, v segment of the variable domain of immunoglobulins light chain that participates in the antigen recognition. Immunoglobulins, also known as antibodies, are membrane-bound or secreted glycoproteins produced by B lymphocytes. In the recognition phase of humoral immunity, the membrane-bound immunoglobulins serve as receptors which, upon binding of a specific antigen, trigger the clonal expansion and differentiation of B lymphocytes into immunoglobulins-secreting plasma cells. Secreted immunoglobulins mediate the effector phase of humoral immunity, which results in the elimination of bound antigens. The antigen binding site is formed by the variable domain of one heavy chain, together with that of its associated light chain. Thus, each immunoglobulin has two antigen binding sites with remarkable affinity for a particular antigen. The variable domains are assembled by a process called V-(D)-J rearrangement and can then be subjected to somatic hypermutations which, after exposure to antigen and selection, allow affinity maturation for a particular antigen. This is Immunoglobulin kappa variable 4-1 from Homo sapiens (Human).